We begin with the raw amino-acid sequence, 374 residues long: Flagellar P-ring protein (374 aa).

The first 29 residues, 1–29, serve as a signal peptide directing secretion; it reads MSGLGFTGVVRIAVMALLALAFLGAPAHA. The span at 296-311 shows a compositional bias: polar residues; it reads ESPQVSQPNPLSNGRT. Positions 296–316 are disordered; it reads ESPQVSQPNPLSNGRTVMTPR.

Belongs to the FlgI family. The basal body constitutes a major portion of the flagellar organelle and consists of four rings (L,P,S, and M) mounted on a central rod.

It localises to the periplasm. The protein localises to the bacterial flagellum basal body. In terms of biological role, assembles around the rod to form the L-ring and probably protects the motor/basal body from shearing forces during rotation. The sequence is that of Flagellar P-ring protein from Nitrobacter winogradskyi (strain ATCC 25391 / DSM 10237 / CIP 104748 / NCIMB 11846 / Nb-255).